The chain runs to 427 residues: Glutamate-1-semialdehyde 2,1-aminomutase (427 aa).

An N6-(pyridoxal phosphate)lysine modification is found at K265.

Belongs to the class-III pyridoxal-phosphate-dependent aminotransferase family. HemL subfamily. In terms of assembly, homodimer. Pyridoxal 5'-phosphate serves as cofactor.

It is found in the cytoplasm. The enzyme catalyses (S)-4-amino-5-oxopentanoate = 5-aminolevulinate. It functions in the pathway porphyrin-containing compound metabolism; protoporphyrin-IX biosynthesis; 5-aminolevulinate from L-glutamyl-tRNA(Glu): step 2/2. The protein is Glutamate-1-semialdehyde 2,1-aminomutase of Burkholderia pseudomallei (strain 1710b).